The primary structure comprises 393 residues: Chorismate synthase (393 aa).

NADP(+) contacts are provided by Arg-40 and Arg-46. FMN is bound by residues 129 to 131, 250 to 251, Gly-301, 316 to 320, and Arg-342; these read RAS, QA, and KPIST.

Belongs to the chorismate synthase family. As to quaternary structure, homotetramer. FMNH2 serves as cofactor.

It catalyses the reaction 5-O-(1-carboxyvinyl)-3-phosphoshikimate = chorismate + phosphate. It participates in metabolic intermediate biosynthesis; chorismate biosynthesis; chorismate from D-erythrose 4-phosphate and phosphoenolpyruvate: step 7/7. Catalyzes the anti-1,4-elimination of the C-3 phosphate and the C-6 proR hydrogen from 5-enolpyruvylshikimate-3-phosphate (EPSP) to yield chorismate, which is the branch point compound that serves as the starting substrate for the three terminal pathways of aromatic amino acid biosynthesis. This reaction introduces a second double bond into the aromatic ring system. In Acidobacterium capsulatum (strain ATCC 51196 / DSM 11244 / BCRC 80197 / JCM 7670 / NBRC 15755 / NCIMB 13165 / 161), this protein is Chorismate synthase.